The following is a 274-amino-acid chain: Glucosamine-6-phosphate deaminase (274 aa).

Residue D72 is the Proton acceptor; for enolization step of the active site. D141 serves as the catalytic For ring-opening step. Residue H143 is the Proton acceptor; for ring-opening step of the active site. E148 acts as the For ring-opening step in catalysis.

Belongs to the glucosamine/galactosamine-6-phosphate isomerase family. As to quaternary structure, homohexamer.

Its subcellular location is the cytoplasm. The enzyme catalyses alpha-D-glucosamine 6-phosphate + H2O = beta-D-fructose 6-phosphate + NH4(+). Its pathway is nucleotide-sugar biosynthesis; UDP-N-acetyl-alpha-D-glucosamine biosynthesis; alpha-D-glucosamine 6-phosphate from D-fructose 6-phosphate: step 1/1. Its function is as follows. Catalyzes the reversible conversion of alpha-D-glucosamine 6-phosphate (GlcN-6P) into beta-D-fructose 6-phosphate (Fru-6P) and ammonium ion, a regulatory reaction step in de novo uridine diphosphate-N-acetyl-alpha-D-glucosamine (UDP-GlcNAc) biosynthesis via hexosamine pathway. The sequence is that of Glucosamine-6-phosphate deaminase from Drosophila pseudoobscura pseudoobscura (Fruit fly).